A 295-amino-acid polypeptide reads, in one-letter code: Bifunctional protein FolD (295 aa).

Residues 166–168 (GRS), Ser-195, and Ile-236 contribute to the NADP(+) site.

The protein belongs to the tetrahydrofolate dehydrogenase/cyclohydrolase family. In terms of assembly, homodimer.

It carries out the reaction (6R)-5,10-methylene-5,6,7,8-tetrahydrofolate + NADP(+) = (6R)-5,10-methenyltetrahydrofolate + NADPH. It catalyses the reaction (6R)-5,10-methenyltetrahydrofolate + H2O = (6R)-10-formyltetrahydrofolate + H(+). It functions in the pathway one-carbon metabolism; tetrahydrofolate interconversion. Its function is as follows. Catalyzes the oxidation of 5,10-methylenetetrahydrofolate to 5,10-methenyltetrahydrofolate and then the hydrolysis of 5,10-methenyltetrahydrofolate to 10-formyltetrahydrofolate. The chain is Bifunctional protein FolD from Chlorobium luteolum (strain DSM 273 / BCRC 81028 / 2530) (Pelodictyon luteolum).